Here is a 67-residue protein sequence, read N- to C-terminus: Conotoxin Cal14.2c (67 aa).

The N-terminal stretch at 1 to 20 is a signal peptide; it reads MNVTVMFLVLLLLTMPLTDG. Residues 21–48 constitute a propeptide that is removed on maturation; that stretch reads FNIRATNGGELFGPVQRDAGNVLDHGFQ.

Belongs to the conotoxin L superfamily. Contains 2 disulfide bonds. As to expression, expressed by the venom duct.

Its subcellular location is the secreted. Its function is as follows. Probable neurotoxin with unknown target. Possibly targets ion channels. The chain is Conotoxin Cal14.2c from Californiconus californicus (California cone).